The following is a 790-amino-acid chain: MEEKRRKYSISSDNSDTTDSHATSTSASRCSKLPSSTKSGWPRQNEKKPSEVFRTDLITAMKIPDSYQLSPDDYYILADPWRQEWEKGVQVPAGAEAIPEPVVRILPPLEGPPAQASPSSTMLGEGSQPDWPGGSRYDLDEIDAYWLELINSELKEMERPELDELTLERVLEELETLCHQNMARAIETQEGLGIEYDEDVVCDVCRSPEGEDGNEMVFCDKCNVCVHQACYGILKVPTGSWLCRTCALGVQPKCLLCPKRGGALKPTRSGTKWVHVSCALWIPEVSIGCPEKMEPITKISHIPASRWALSCSLCKECTGTCIQCSMPSCVTAFHVTCAFDHGLEMRTILADNDEVKFKSFCQEHSDGGPRNEPTSEPTEPSQAGEDLEKVTLRKQRLQQLEEDFYELVEPAEVAERLDLAEALVDFIYQYWKLKRKANANQPLLTPKTDEVDNLAQQEQDVLYRRLKLFTHLRQDLERVRNLCYMVTRRERTKHAICKLQEQIFHLQMKLIEQDLCRGLSTSFPIDGTFFNSWLAQSVQITAENMAMSEWPLNNGHREDPAPGLLSEELLQDEETLLSFMRDPSLRPGDPARKARGRTRLPAKKKPPPPPPQDGPGSRTTPDKAPKKTWGQDAGSGKGGQGPPTRKPPRRTSSHLPSSPAAGDCPILATPESPPPLAPETPDEAASVAADSDVQVPGPAASPKPLGRLRPPRESKVTRRLPGARPDAGMGPPSAVAERPKVSLHFDTETDGYFSDGEMSDSDVEAEDGGVQRGPREAGAEEVVRMGVLAS.

Disordered stretches follow at residues 1–52 and 111–130; these read MEEK…PSEV and GPPA…SQPD. Serine 9 and serine 15 each carry phosphoserine. Low complexity predominate over residues 9-28; sequence SISSDNSDTTDSHATSTSAS. Residues lysine 32 and lysine 38 each carry the N6-acetyllysine modification. At serine 117 the chain carries Phosphoserine. The PHD-type 1 zinc-finger motif lies at 199–249; sequence DVVCDVCRSPEGEDGNEMVFCDKCNVCVHQACYGILKVPTGSWLCRTCALG. A C2HC pre-PHD-type zinc finger spans residues 251 to 285; the sequence is QPKCLLCPKRGGALKPTRSGTKWVHVSCALWIPEV. An N6-acetyllysine modification is found at lysine 298. A PHD-type 2 zinc finger spans residues 309 to 365; the sequence is LSCSLCKECTGTCIQCSMPSCVTAFHVTCAFDHGLEMRTILADNDEVKFKSFCQEHS. 2 disordered regions span residues 361–386 and 578–777; these read CQEH…AGED and SFMR…PREA. Residues 372-381 show a composition bias toward polar residues; that stretch reads EPTSEPTEPS. Basic residues predominate over residues 593–606; it reads KARGRTRLPAKKKP. A compositionally biased stretch (low complexity) spans 684 to 693; the sequence is AASVAADSDV. Over residues 737 to 747 the composition is skewed to basic and acidic residues; the sequence is ERPKVSLHFDT. Positions 757–767 are enriched in acidic residues; the sequence is EMSDSDVEAED.

Belongs to the JADE family. As to quaternary structure, component of the HBO1 complex composed at least of ING4 or ING5, MYST2/HBO1, MEAF6, and one of JADE1, JADE2 and JADE3. Interacts (via C-terminus) with KDM1A (via AOD/Tower domain).

The enzyme catalyses S-ubiquitinyl-[E2 ubiquitin-conjugating enzyme]-L-cysteine + [acceptor protein]-L-lysine = [E2 ubiquitin-conjugating enzyme]-L-cysteine + N(6)-ubiquitinyl-[acceptor protein]-L-lysine.. Its pathway is protein modification; protein ubiquitination. Functionally, scaffold subunit of some HBO1 complexes, which have a histone H4 acetyltransferase activity. Acts as an E3 ubiquitin-protein ligase mediating the ubiquitination and subsequent proteasomal degradation of target protein histone demethylase KDM1A. Also acts as a ubiquitin ligase E3 toward itself. Positive regulator of neurogenesis. This is E3 ubiquitin-protein ligase Jade-2 (JADE2) from Homo sapiens (Human).